Consider the following 1088-residue polypeptide: Protein unc-13 homolog D (1088 aa).

Residues 26–46 form a disordered region; it reads VRDLQDPPPQATPEVQVQSHH. A C2 1 domain is found at 92–239; it reads QPEEHQQMLQ…FKEARKDKGQ (148 aa). Ca(2+)-binding residues include Asp127 and Asp133. Ser150 bears the Phosphoserine mark. Ca(2+) contacts are provided by Asp206 and Asp208. An interaction with RAB27A region spans residues 240–543; it reads DDFLGNVMLR…AKRVQDHTAA (304 aa). The MHD1 domain maps to 557–675; that stretch reads FQLYVSLREF…RLALVYCSLI (119 aa). The 108-residue stretch at 786 to 893 folds into the MHD2 domain; it reads EDAILPLMKF…ASSRELIQKY (108 aa). A C2 2 domain is found at 908–1033; it reads RLGAVTVKAS…PGLTGCVEPG (126 aa). 6 residues coordinate Ca(2+): Leu938, Asp939, Asp945, Asp1003, Asp1005, and Asp1011.

It belongs to the unc-13 family. As to quaternary structure, interacts with RAB27A and DOC2A. Interacts with RhoG; the interaction increases RhoG affinity to the membrane lipids, targets Unc13d to membrane lipids and facilitates cytotoxic granule (CG) docking to the plasma membrane. It depends on Ca(2+) as a cofactor. Expressed in lung bronchial epithelium goblet/mucous cells. Also expressed in spleen and testis. Expressed at very low levels in heart muscle, kidney, liver, brain and skeletal muscle.

It is found in the cytoplasm. It localises to the membrane. The protein resides in the late endosome. Its subcellular location is the recycling endosome. The protein localises to the lysosome. In terms of biological role, plays a role in cytotoxic granule exocytosis in lymphocytes. Required for both granule maturation and granule docking and priming at the immunologic synapse. Regulates assembly of recycling and late endosomal structures, leading to the formation of an endosomal exocytic compartment that fuses with perforin-containing granules at the immunologic synapse and licences them for exocytosis. Regulates Ca(2+)-dependent secretory lysosome exocytosis in mast cells. The chain is Protein unc-13 homolog D (Unc13d) from Rattus norvegicus (Rat).